Reading from the N-terminus, the 82-residue chain is Metallothionein-like protein 2A (82 aa).

The protein belongs to the metallothionein superfamily. Type 15 family. In terms of tissue distribution, expressed in stems, leaves, rachis, inflorescences and seeds.

Its function is as follows. Metallothioneins have a high content of cysteine residues that bind various heavy metals. The polypeptide is Metallothionein-like protein 2A (MT2A) (Oryza sativa subsp. japonica (Rice)).